Reading from the N-terminus, the 428-residue chain is 3-phosphoshikimate 1-carboxyvinyltransferase (428 aa).

Positions 22, 23, and 27 each coordinate 3-phosphoshikimate. K22 serves as a coordination point for phosphoenolpyruvate. Phosphoenolpyruvate-binding residues include G95 and R123. 3-phosphoshikimate contacts are provided by S170, S171, Q172, S197, D316, and K343. Q172 is a phosphoenolpyruvate binding site. Catalysis depends on D316, which acts as the Proton acceptor. The phosphoenolpyruvate site is built by R347, R390, and K414.

This sequence belongs to the EPSP synthase family. As to quaternary structure, monomer.

It is found in the cytoplasm. It catalyses the reaction 3-phosphoshikimate + phosphoenolpyruvate = 5-O-(1-carboxyvinyl)-3-phosphoshikimate + phosphate. The protein operates within metabolic intermediate biosynthesis; chorismate biosynthesis; chorismate from D-erythrose 4-phosphate and phosphoenolpyruvate: step 6/7. Functionally, catalyzes the transfer of the enolpyruvyl moiety of phosphoenolpyruvate (PEP) to the 5-hydroxyl of shikimate-3-phosphate (S3P) to produce enolpyruvyl shikimate-3-phosphate and inorganic phosphate. This Laribacter hongkongensis (strain HLHK9) protein is 3-phosphoshikimate 1-carboxyvinyltransferase.